The sequence spans 704 residues: Elongation factor G (704 aa).

The region spanning 8–290 is the tr-type G domain; the sequence is ARYRNIGISA…AVIDYLPSPV (283 aa). GTP-binding positions include 17–24, 88–92, and 142–145; these read AHIDAGKT, DTPGH, and NKMD.

The protein belongs to the TRAFAC class translation factor GTPase superfamily. Classic translation factor GTPase family. EF-G/EF-2 subfamily.

Its subcellular location is the cytoplasm. Its function is as follows. Catalyzes the GTP-dependent ribosomal translocation step during translation elongation. During this step, the ribosome changes from the pre-translocational (PRE) to the post-translocational (POST) state as the newly formed A-site-bound peptidyl-tRNA and P-site-bound deacylated tRNA move to the P and E sites, respectively. Catalyzes the coordinated movement of the two tRNA molecules, the mRNA and conformational changes in the ribosome. The polypeptide is Elongation factor G (Cronobacter sakazakii (strain ATCC BAA-894) (Enterobacter sakazakii)).